The primary structure comprises 155 residues: 1,4-dihydroxy-2-naphthoyl-CoA hydrolase (155 aa).

Aspartate 27 is a catalytic residue.

Belongs to the 4-hydroxybenzoyl-CoA thioesterase family. DHNA-CoA hydrolase subfamily.

The enzyme catalyses 1,4-dihydroxy-2-naphthoyl-CoA + H2O = 1,4-dihydroxy-2-naphthoate + CoA + H(+). The protein operates within cofactor biosynthesis; phylloquinone biosynthesis. Its pathway is quinol/quinone metabolism; 1,4-dihydroxy-2-naphthoate biosynthesis; 1,4-dihydroxy-2-naphthoate from chorismate: step 7/7. Catalyzes the hydrolysis of 1,4-dihydroxy-2-naphthoyl-CoA (DHNA-CoA) to 1,4-dihydroxy-2-naphthoate (DHNA), a reaction involved in phylloquinone (vitamin K1) biosynthesis. This chain is 1,4-dihydroxy-2-naphthoyl-CoA hydrolase, found in Prochlorococcus marinus (strain NATL2A).